The following is a 452-amino-acid chain: Poly(A) polymerase I (452 aa).

Catalysis depends on residues aspartate 68, aspartate 70, and aspartate 150. Residues 427-452 are disordered; it reads EQQRLHPKPKKKYYRPRRRKTTCSAE. A compositionally biased stretch (basic residues) spans 431-452; that stretch reads LHPKPKKKYYRPRRRKTTCSAE.

Belongs to the tRNA nucleotidyltransferase/poly(A) polymerase family.

It carries out the reaction RNA(n) + ATP = RNA(n)-3'-adenine ribonucleotide + diphosphate. Functionally, adds poly(A) tail to the 3' end of many RNAs, which usually targets these RNAs for decay. Plays a significant role in the global control of gene expression, through influencing the rate of transcript degradation, and in the general RNA quality control. This Haemophilus influenzae (strain ATCC 51907 / DSM 11121 / KW20 / Rd) protein is Poly(A) polymerase I.